Here is a 168-residue protein sequence, read N- to C-terminus: Putative flavin-containing monooxygenase FMO GS-OX-like 11 (168 aa).

17 to 22 (GAGAAG) provides a ligand contact to FAD.

Belongs to the FMO family. Requires FAD as cofactor.

Catalyzes the conversion of methylthioalkyl glucosinolates of any chain length into methylsulfinylalkyl glucosinolates. In Arabidopsis thaliana (Mouse-ear cress), this protein is Putative flavin-containing monooxygenase FMO GS-OX-like 11.